Consider the following 185-residue polypeptide: Transmembrane protein 252 (185 aa).

The next 2 membrane-spanning stretches (helical) occupy residues 8 to 28 (VLCA…GFFI) and 39 to 59 (LVVA…GIFW). Positions 125 to 149 (YTETSLEPQDKDKNDPQPEAPPPYP) are disordered.

It is found in the membrane. The chain is Transmembrane protein 252 (Tmem252) from Rattus norvegicus (Rat).